The primary structure comprises 313 residues: D-alanine--D-alanine ligase (313 aa).

Residues 107-303 enclose the ATP-grasp domain; sequence KQAFAAAGLT…FEALVEQIAC (197 aa). 135–188 contributes to the ATP binding site; that stretch reads PFGLPVVVKPVQEGSSVGVTIVKKPEDLQAALDEAFRYDTLVLVEKYIKGQEVQ. Mg(2+) is bound by residues aspartate 256, glutamate 269, and asparagine 271.

Belongs to the D-alanine--D-alanine ligase family. The cofactor is Mg(2+). Requires Mn(2+) as cofactor.

Its subcellular location is the cytoplasm. It catalyses the reaction 2 D-alanine + ATP = D-alanyl-D-alanine + ADP + phosphate + H(+). Its pathway is cell wall biogenesis; peptidoglycan biosynthesis. In terms of biological role, cell wall formation. In Trichlorobacter lovleyi (strain ATCC BAA-1151 / DSM 17278 / SZ) (Geobacter lovleyi), this protein is D-alanine--D-alanine ligase.